A 427-amino-acid chain; its full sequence is Adenylosuccinate synthetase (427 aa).

GTP contacts are provided by residues 12-18 (GDEGKGK) and 40-42 (GHT). The active-site Proton acceptor is D13. Mg(2+)-binding residues include D13 and G40. Residues 13–16 (DEGK), 38–41 (NAGH), T130, R144, Q224, T239, and R303 each bind IMP. H41 (proton donor) is an active-site residue. 299–305 (SVTGRPR) provides a ligand contact to substrate. GTP contacts are provided by residues R305, 331 to 333 (KLD), and 411 to 413 (SVG).

Belongs to the adenylosuccinate synthetase family. As to quaternary structure, homodimer. It depends on Mg(2+) as a cofactor.

The protein resides in the cytoplasm. It carries out the reaction IMP + L-aspartate + GTP = N(6)-(1,2-dicarboxyethyl)-AMP + GDP + phosphate + 2 H(+). It functions in the pathway purine metabolism; AMP biosynthesis via de novo pathway; AMP from IMP: step 1/2. Functionally, plays an important role in the de novo pathway of purine nucleotide biosynthesis. Catalyzes the first committed step in the biosynthesis of AMP from IMP. This is Adenylosuccinate synthetase from Sorangium cellulosum (strain So ce56) (Polyangium cellulosum (strain So ce56)).